Reading from the N-terminus, the 320-residue chain is Glutathione synthetase (320 aa).

One can recognise an ATP-grasp domain in the interval 130-315 (KIFTSWFPDL…ITGMLLDYIE (186 aa)). 156–212 (WEKYQDIIIKPLDAMGGANIFRIKKNDPNFSVIVENMTNYERKYCMVQNYLPEIKLG) lines the ATP pocket. The Mg(2+) site is built by Glu286 and Asn288.

The protein belongs to the prokaryotic GSH synthase family. It depends on Mg(2+) as a cofactor. Requires Mn(2+) as cofactor.

It carries out the reaction gamma-L-glutamyl-L-cysteine + glycine + ATP = glutathione + ADP + phosphate + H(+). It functions in the pathway sulfur metabolism; glutathione biosynthesis; glutathione from L-cysteine and L-glutamate: step 2/2. The sequence is that of Glutathione synthetase from Buchnera aphidicola subsp. Acyrthosiphon pisum (strain APS) (Acyrthosiphon pisum symbiotic bacterium).